A 490-amino-acid chain; its full sequence is Cytochrome P450 71D11 (490 aa).

Residue cysteine 427 participates in heme binding.

This sequence belongs to the cytochrome P450 family. Heme serves as cofactor.

This chain is Cytochrome P450 71D11 (CYP71D11), found in Lotus japonicus (Lotus corniculatus var. japonicus).